We begin with the raw amino-acid sequence, 164 residues long: MKSVVTTVVTAADAAGRFPSQNDLEAVQGNIQRAAARLEAAEKLAAGLDAVTKEAGDACFNKYPYLKQPGEAGENQTKVDKCYRDLGHYLRLINYCLVVGGTGPLDEWGIAGAREVYRTLGLPTGPYVEALTYTRDRACAPRDMSPQALNEFKSYLDYVINALS.

(2R,3E)-phycoerythrobilin-binding residues include C82 and C139.

Belongs to the phycobiliprotein family. Heterodimer of an alpha and a beta chain. Contains one covalently linked bilin chromophore.

The protein resides in the cellular thylakoid membrane. Functionally, light-harvesting photosynthetic bile pigment-protein from the phycobiliprotein complex. The protein is C-phycoerythrin class 1 subunit alpha (cpeA) of Synechococcus sp. (strain WH7803).